A 271-amino-acid chain; its full sequence is Neurexophilin-1 (271 aa).

The first 21 residues, 1 to 21 (MQAACWYVLLLLQPTVYLVTC), serve as a signal peptide directing secretion. The interval 22–97 (ANLTNGGKSE…WDWLRNSTDL (76 aa)) is II. N-linked (GlcNAc...) asparagine glycans are attached at residues N23, N68, N93, N146, N156, and N162. Residues 98–176 (QEPRPRAKRR…LVPPTKIVEF (79 aa)) form an III region. The IV (linker domain) stretch occupies residues 177–185 (DLAQQTVID). The v (Cys-rich) stretch occupies residues 186–271 (AKDSKSFNCR…HSDTPYFPSG (86 aa)).

The protein belongs to the neurexophilin family. In terms of processing, may be proteolytically processed at the boundary between the N-terminal non-conserved and the central conserved domain in neuron-like cells.

It localises to the secreted. Its function is as follows. May be signaling molecules that resemble neuropeptides. Ligand for alpha-neurexins. The sequence is that of Neurexophilin-1 (NXPH1) from Bos taurus (Bovine).